Consider the following 384-residue polypeptide: L-cysteine:1D-myo-inositol 2-amino-2-deoxy-alpha-D-glucopyranoside ligase (384 aa).

C16 provides a ligand contact to Zn(2+). L-cysteinyl-5'-AMP contacts are provided by residues 16-19 (CGIT), T31, and 54-56 (NVT). Positions 18–28 (ITPYDATHLGH) match the 'HIGH' region motif. Positions 159–164 (QSGGDP) match the 'ERGGDP' region motif. Position 199 (W199) interacts with L-cysteinyl-5'-AMP. Residue C203 participates in Zn(2+) binding. 221–223 (GSD) provides a ligand contact to L-cysteinyl-5'-AMP. Residue H228 participates in Zn(2+) binding. L-cysteinyl-5'-AMP is bound at residue I255. The 'KMSKS' region motif lies at 261–265 (KMSKS).

It belongs to the class-I aminoacyl-tRNA synthetase family. MshC subfamily. Monomer. Zn(2+) serves as cofactor.

It catalyses the reaction 1D-myo-inositol 2-amino-2-deoxy-alpha-D-glucopyranoside + L-cysteine + ATP = 1D-myo-inositol 2-(L-cysteinylamino)-2-deoxy-alpha-D-glucopyranoside + AMP + diphosphate + H(+). Its function is as follows. Catalyzes the ATP-dependent condensation of GlcN-Ins and L-cysteine to form L-Cys-GlcN-Ins. The chain is L-cysteine:1D-myo-inositol 2-amino-2-deoxy-alpha-D-glucopyranoside ligase from Mycobacterium leprae (strain Br4923).